Reading from the N-terminus, the 844-residue chain is MSDIFNSPQNKASILNALMKSTQGDVEDVLIPKRFRPAKDPLDSPQAAAAFLKEHKYRILRPRAIPTMVEIETDAALPRLAAMVDDGKLKEMVNVPEGTTAFYPKYYPFHRPDHDDVGTFGAPDITLLKQLTFFLLENDFPTGPETLRQVREAIATLQYGSGSYSGQLNRLLAMKGVATGRNPNKTPLAVGYTNEQMARLMEQTLPINPPKNEDPDLRWAPSWLIQYTGDASTDKSYLPHVTAKSSAGLPYIGKTKGDTTAEALVLADSFIRDLGKAATSADPGAAAKKVLSDFWYLSCGLLFPKGERYTQKDWDLKTRNIWSAPYPTHLLLSMVSSPVMDESKLNITNTQTPSLYGFSPFHGGINRIMTIIREHLDQEQDLVMIYADNIYILQDNTWYSIDLEKGEANCTPQHMQAMMYYRLTREWTNEDGSPRYNPTWATFAMYVGPSMVVDSTCLLMNLQLKTTGQGSGNAFTFLNNHLMSTIVVAEWHKAGRPNPMSKEFMDLEAKTGINFKIERELKDLRSIIMEAVDTAPLDGYLADGSDLPPRVPGKAVELDLLGWSAVYSRQLEMFVPVLENERLIASVAYPKGLENKSLARKPGAEIAYQIVRYEAIRLIGGWNNPLIETAAKHMSLDKRKRLEVKGIDVTGFLDDWNTMSEFGGDLEGISLTAPLTNQTLLDINTPETEFDVKDRPPTPRSPGKTLAEVTAAITSGTYKDPKSAVWRLLDQRTKLRVSTLRDHAHALKPAASTSDFWGDATEELAEQQQLLMKANNLLKSSLTEAREALETVQSDKIISGKTSPEKNPGTAANPVVAYGEFSEKIPLTPTQKKNAKRREKQRRN.

Gly-248 to Thr-255 is a binding site for GTP. In terms of domain architecture, RdRp catalytic spans Met-384 to Ala-588. The tract at residues Glu-820–Asn-844 is disordered. A compositionally biased stretch (basic residues) spans Lys-833 to Asn-844.

Interacts with VP3 in the cytoplasm. In terms of processing, exists in multiple phosphorylated forms.

The protein resides in the virion. It catalyses the reaction RNA(n) + a ribonucleoside 5'-triphosphate = RNA(n+1) + diphosphate. Functionally, RNA-dependent RNA polymerase which is found both free and covalently attached to the genomic RNA. May also contain guanylyl and methyl transferase activities. This is RNA-directed RNA polymerase (VP1) from Infectious pancreatic necrosis virus (strain Sp) (IPNV).